The primary structure comprises 294 residues: 2,2',3-trihydroxybiphenyl dioxygenase (294 aa).

VOC domains follow at residues 7-120 and 144-264; these read GYLI…LYVE and GLGH…LGFG. Positions 147, 209, and 260 each coordinate Fe cation.

It belongs to the extradiol ring-cleavage dioxygenase family. Monomer. Fe(2+) serves as cofactor.

The protein operates within xenobiotic degradation; dibenzo-p-dioxin degradation; 2-hydroxymuconate and catechol from dibenzo-p-dioxin: step 2/3. It participates in xenobiotic degradation; dibenzofuran degradation; 2-hydroxy-2,4-pentadienoate and salicylate from dibenzofuran: step 2/3. Functionally, responsible for meta-cleavage of the first aromatic ring of 2,2',3-trihydroxybiphenyl and 2,3-dihydroxybiphenyl. 2,2',3-trihydroxydiphenyl ether, catechol, 3-methylcatechol, and 4-methylcatechol are oxidized less efficiently and 3,4-dihydroxybiphenyl is oxidized considerably less efficiently. The sequence is that of 2,2',3-trihydroxybiphenyl dioxygenase (dbfB) from Sphingomonas paucimobilis (Pseudomonas paucimobilis).